Reading from the N-terminus, the 397-residue chain is Phosphoglycerate kinase (397 aa).

Substrate-binding positions include 25-27 (DLN), Arg41, 64-67 (HLGR), Arg118, and Arg151. ATP contacts are provided by residues Lys202, Glu324, and 350–353 (GGDT).

The protein belongs to the phosphoglycerate kinase family. In terms of assembly, monomer.

It is found in the cytoplasm. It catalyses the reaction (2R)-3-phosphoglycerate + ATP = (2R)-3-phospho-glyceroyl phosphate + ADP. It functions in the pathway carbohydrate degradation; glycolysis; pyruvate from D-glyceraldehyde 3-phosphate: step 2/5. The polypeptide is Phosphoglycerate kinase (Paracidovorax citrulli (strain AAC00-1) (Acidovorax citrulli)).